Here is a 645-residue protein sequence, read N- to C-terminus: Sodium/potassium/calcium exchanger 3 (645 aa).

The N-terminal stretch at 1 to 43 (MPPPGDQDCARRRSRRRRRDLLLSQLCFLASVALLLWSLSSLR) is a signal peptide. Residues 44–106 (EQKELDLMDL…DIFSNEDRRQ (63 aa)) lie on the Extracellular side of the membrane. 2 N-linked (GlcNAc...) asparagine glycosylation sites follow: N70 and N85. The chain crosses the membrane as a helical span at residues 107 to 127 (GAVVLHVLCAMYMFYALAIVC). Topologically, residues 128 to 151 (DDFFVPSLEKICERLHLSEDVAGA) are cytoplasmic. The stretch at 148-188 (VAGATFMAAGSSAPELFTSVIGVFITKGDVGVGTIVGSAVF) is one Alpha-1 repeat. The helical transmembrane segment at 152–172 (TFMAAGSSAPELFTSVIGVFI) threads the bilayer. At 173–181 (TKGDVGVGT) the chain is on the extracellular side. The helical transmembrane segment at 182–202 (IVGSAVFNILCIIGVCGLFAG) threads the bilayer. The Cytoplasmic portion of the chain corresponds to 203–209 (QVVALSS). Residues 210–230 (WCLLRDSIYYTLSVVALIVFI) form a helical membrane-spanning segment. At 231-234 (YDEK) the chain is on the extracellular side. Residues 235-255 (VSWWESLVLVLMYLIYIVIMK) form a helical membrane-spanning segment. Residues 256–486 (YNACIHQCFE…WFMVTFASST (231 aa)) are Cytoplasmic-facing. At S307 the chain carries Phosphoserine. Disordered regions lie at residues 379–398 (TVEN…NGTR) and 404–442 (AETD…PFDP). Over residues 404 to 435 (AETDNETENENEDNENNENDEEEEEDEDDDEG) the composition is skewed to acidic residues. The chain crosses the membrane as a helical span at residues 487–507 (LWIAAFSYMMVWMVTIIGYTL). At 508–512 (GIPDV) the chain is on the extracellular side. A helical membrane pass occupies residues 513–533 (IMGITFLAAGTSVPDCMASLI). An Alpha-2 repeat occupies 520-551 (AAGTSVPDCMASLIVARQGMGDMAVSNSIGSN). Over 534–551 (VARQGMGDMAVSNSIGSN) the chain is Cytoplasmic. The chain crosses the membrane as a helical span at residues 552–572 (VFDILIGLGLPWALQTLAVDY). The Extracellular portion of the chain corresponds to 573 to 582 (GSYIRLNSRG). Residues 583–603 (LIYSVGLLLASVFVTVFGVHL) traverse the membrane as a helical segment. The Cytoplasmic segment spans residues 604–617 (NKWQLDKKLGCGCL). A helical membrane pass occupies residues 618-638 (FLYGVFLCFSIMTEFNVFTFV). At 639-645 (NLPMCGD) the chain is on the extracellular side.

It belongs to the Ca(2+):cation antiporter (CaCA) (TC 2.A.19) family. SLC24A subfamily. Abundant in the brain. Highest levels found in selected thalamic nuclei, hippocampal CA1 neurons and in layer IV of the cerebral cortex. Expressed in dental tissues.

Its subcellular location is the cell membrane. It carries out the reaction Ca(2+)(out) + K(+)(out) + 4 Na(+)(in) = Ca(2+)(in) + K(+)(in) + 4 Na(+)(out). Its function is as follows. Calcium, potassium:sodium antiporter that transports 1 Ca(2+) and 1 K(+) in exchange for 4 Na(+). The chain is Sodium/potassium/calcium exchanger 3 (Slc24a3) from Mus musculus (Mouse).